The chain runs to 198 residues: Protein GrpE (198 aa).

The segment covering 1–14 has biased composition (basic and acidic residues); it reads MSNEENKINEEALK. The tract at residues 1 to 20 is disordered; it reads MSNEENKINEEALKQQDAAE.

This sequence belongs to the GrpE family. In terms of assembly, homodimer.

Its subcellular location is the cytoplasm. Participates actively in the response to hyperosmotic and heat shock by preventing the aggregation of stress-denatured proteins, in association with DnaK and GrpE. It is the nucleotide exchange factor for DnaK and may function as a thermosensor. Unfolded proteins bind initially to DnaJ; upon interaction with the DnaJ-bound protein, DnaK hydrolyzes its bound ATP, resulting in the formation of a stable complex. GrpE releases ADP from DnaK; ATP binding to DnaK triggers the release of the substrate protein, thus completing the reaction cycle. Several rounds of ATP-dependent interactions between DnaJ, DnaK and GrpE are required for fully efficient folding. This chain is Protein GrpE, found in Vibrio vulnificus (strain YJ016).